A 258-amino-acid polypeptide reads, in one-letter code: uncharacterized protein (258 aa).

Residues 40-54 (AQKTDTPLDSSSYAV) are compositionally biased toward polar residues. The interval 40-63 (AQKTDTPLDSSSYAVTSPEEAPNE) is disordered.

This is an uncharacterized protein from Treponema pallidum (strain Nichols).